The primary structure comprises 230 residues: Ribonuclease 3 (230 aa).

Residues 5-125 enclose the RNase III domain; that stretch reads YSRFYNILGY…VIGAIYLDSD (121 aa). A Mg(2+)-binding site is contributed by Glu40. Asp44 is an active-site residue. Asp111 and Glu114 together coordinate Mg(2+). Glu114 is an active-site residue. Residues 153-223 form the DRBM domain; that stretch reads DSKSKLQEIL…AEKMIEMLSQ (71 aa).

This sequence belongs to the ribonuclease III family. Homodimer. It depends on Mg(2+) as a cofactor.

Its subcellular location is the cytoplasm. It catalyses the reaction Endonucleolytic cleavage to 5'-phosphomonoester.. Its function is as follows. Digests double-stranded RNA. Involved in the processing of primary rRNA transcript to yield the immediate precursors to the large and small rRNAs (23S and 16S). Processes some mRNAs, and tRNAs when they are encoded in the rRNA operon. Processes pre-crRNA and tracrRNA of type II CRISPR loci if present in the organism. The protein is Ribonuclease 3 of Francisella tularensis subsp. holarctica (strain LVS).